A 778-amino-acid chain; its full sequence is Endonuclease MutS2 (778 aa).

An ATP-binding site is contributed by 329–336; that stretch reads GPNTGGKT. The region spanning 703–778 is the Smr domain; that stretch reads LDLRGKRYEE…GSGCTIVTFK (76 aa).

The protein belongs to the DNA mismatch repair MutS family. MutS2 subfamily. In terms of assembly, homodimer. Binds to stalled ribosomes, contacting rRNA.

In terms of biological role, endonuclease that is involved in the suppression of homologous recombination and thus may have a key role in the control of bacterial genetic diversity. Functionally, acts as a ribosome collision sensor, splitting the ribosome into its 2 subunits. Detects stalled/collided 70S ribosomes which it binds and splits by an ATP-hydrolysis driven conformational change. Acts upstream of the ribosome quality control system (RQC), a ribosome-associated complex that mediates the extraction of incompletely synthesized nascent chains from stalled ribosomes and their subsequent degradation. Probably generates substrates for RQC. The protein is Endonuclease MutS2 of Streptococcus suis (strain 98HAH33).